We begin with the raw amino-acid sequence, 276 residues long: Undecaprenyl-diphosphatase 1 (276 aa).

Helical transmembrane passes span F83–K103, V108–W128, V187–E207, V217–C237, and V252–W272.

It belongs to the UppP family.

It localises to the cell inner membrane. The catalysed reaction is di-trans,octa-cis-undecaprenyl diphosphate + H2O = di-trans,octa-cis-undecaprenyl phosphate + phosphate + H(+). In terms of biological role, catalyzes the dephosphorylation of undecaprenyl diphosphate (UPP). Confers resistance to bacitracin. The sequence is that of Undecaprenyl-diphosphatase 1 from Burkholderia cenocepacia (strain HI2424).